Consider the following 2281-residue polypeptide: Protein Ycf2 (2281 aa).

ATP is bound at residue Gly-1635 to Ser-1642.

Belongs to the Ycf2 family.

The protein resides in the plastid. It localises to the chloroplast stroma. Probable ATPase of unknown function. Its presence in a non-photosynthetic plant (Epifagus virginiana) and experiments in tobacco indicate that it has an essential function which is probably not related to photosynthesis. The polypeptide is Protein Ycf2 (Coffea arabica (Arabian coffee)).